Reading from the N-terminus, the 1481-residue chain is Cystic fibrosis transmembrane conductance regulator (1481 aa).

The Cytoplasmic portion of the chain corresponds to 1–77 (MQRSPLEKAS…KLINALRRCF (77 aa)). A helical transmembrane segment spans residues 78–98 (FWRFMFYGIILYLGEVTKAVQ). Residues 81 to 365 (FMFYGIILYL…WAVQTWYDSL (285 aa)) enclose the ABC transmembrane type-1 1 domain. At 99–122 (PLLLGRIIASYDPDNEAERSIAIY) the chain is on the extracellular side. A helical transmembrane segment spans residues 123–146 (LGIGLCLLFIVRTLLLHPAIFGLH). Residues 147-195 (HIGMQMRIAMFSLIYKKTLKLSSRVLDKISIGQLVSLLSNNLNKFDEGL) lie on the Cytoplasmic side of the membrane. Residues 196 to 216 (ALAHFVWIAPLQVTLLMGLLW) form a helical membrane-spanning segment. Over 217–222 (DLLQAS) the chain is Extracellular. The chain crosses the membrane as a helical span at residues 223-243 (AFCGLAFLIVLALFQAGLGRM). The Cytoplasmic segment spans residues 244–298 (MMKYRDQRAGKINERLVITSEMIENIQSVKAYCWEEAMEKMIENLRQTELKLTRK). Residues 299–319 (AAYVRYFNSSAFFFSGFFVVF) form a helical membrane-spanning segment. Topologically, residues 320-339 (LSVLPYALIKGIVLRRIFTT) are extracellular. The helical transmembrane segment at 340–358 (ISFCIVLRMAVTRQFPWAV) threads the bilayer. At 359 to 858 (QTWYDSLGAI…YLRYITIHKS (500 aa)) the chain is on the cytoplasmic side. Residues Trp-401, Ser-433, 457 to 464 (GSTGAGKT), and Gln-492 contribute to the ATP site. An ABC transporter 1 domain is found at 422-645 (NGDNSLFFSN…RPDFSSKLMG (224 aa)). Cys-523 carries the S-palmitoyl cysteine lipid modification. Residues Ser-548 and Ser-659 each carry the phosphoserine modification. Residues 653–831 (SAERRNSILT…EEINEDDLKE (179 aa)) form a disordered R region region. Position 669 is a phosphoserine; by PKA (Ser-669). Ser-685 carries the post-translational modification Phosphoserine. Residue Lys-687 forms a Glycyl lysine isopeptide (Lys-Gly) (interchain with G-Cter in ubiquitin) linkage. Residues Ser-699 and Ser-711 each carry the phosphoserine modification. Thr-716 carries the post-translational modification Phosphothreonine. Residues Ser-736, Ser-767, Ser-790, Ser-795, and Ser-813 each carry the phosphoserine modification. Residues 859–879 (LIFVLIWCLVIFLAEVAASLV) form a helical membrane-spanning segment. Residues 859–1155 (LIFVLIWCLV…AVNSSIDVDS (297 aa)) form the ABC transmembrane type-1 2 domain. Residues 880–918 (VLWLLKETPPQDSGNSTKGANNSYAVIITSTSSYYVFYI) lie on the Extracellular side of the membrane. Residues Asn-894 and Asn-900 are each glycosylated (N-linked (GlcNAc...) asparagine). The chain crosses the membrane as a discontinuously helical span at residues 919–939 (YVGVADTLLALGLFRGLPLVH). Over 940–990 (TLITVSKILHHKMLHSVLQAPMSTLNTLKAGGILNRFSKDMAILDDLLPLT) the chain is Cytoplasmic. The helical transmembrane segment at 991 to 1011 (IFDFIQLLLIVIGAVAVVSVL) threads the bilayer. The Extracellular portion of the chain corresponds to 1012–1013 (QP). The helical transmembrane segment at 1014-1034 (YIFLATVPVIAAFIILRAYFL) threads the bilayer. Topologically, residues 1035-1095 (HTSQQLKQLE…TANWFLYLST (61 aa)) are cytoplasmic. The chain crosses the membrane as a helical span at residues 1096–1116 (LRWFQMRIEMIFVIFFIAVTF). Over 1117–1130 (ISILTTGEGEGTVG) the chain is Extracellular. Residues 1131–1151 (IILTLAMNIMSTLQWAVNSSI) traverse the membrane as a helical segment. Residues 1152-1481 (DVDSLMRSVS…TEEEVQETRL (330 aa)) are Cytoplasmic-facing. The 234-residue stretch at 1211–1444 (MTVKDLTAKY…KSLFQQAISS (234 aa)) folds into the ABC transporter 2 domain. ATP-binding positions include Tyr-1220 and 1245–1252 (GRTGSGKS). The interval 1387–1481 (RTLKQAFADC…TEEEVQETRL (95 aa)) is interaction with GORASP2. A lipid anchor (S-palmitoyl cysteine) is attached at Cys-1396. Ser-1445 and Ser-1457 each carry phosphoserine. The tract at residues 1449–1481 (KLFPHRNSSKHKSRSKIAALQEETEEEVQETRL) is disordered. Over residues 1451–1463 (FPHRNSSKHKSRS) the composition is skewed to basic residues. Residues 1470–1481 (EETEEEVQETRL) are compositionally biased toward acidic residues. Positions 1479 to 1481 (TRL) match the PDZ-binding motif.

The protein belongs to the ABC transporter superfamily. ABCC family. CFTR transporter (TC 3.A.1.202) subfamily. In terms of assembly, monomer; does not require oligomerization for channel activity. May form oligomers in the membrane. Interacts with SLC26A3, SLC26A6 and NHERF1. Interacts with SHANK2. Interacts with MYO6. Interacts (via C-terminus) with GOPC (via PDZ domain); this promotes CFTR internalization and thereby decreases channel activity. Interacts with SLC4A7 through NHERF1. Found in a complex with MYO5B and RAB11A. Interacts with ANO1. Interacts with SLC26A8. Interacts with AHCYL1; the interaction increases CFTR activity. Interacts with CSE1L. The core-glycosylated form interacts with GORASP2 (via PDZ GRASP-type 1 domain) in respone to ER stress. Interacts with MARCHF2; the interaction leads to CFTR ubiqtuitination and degradation. Interacts with ADGRG2. In terms of processing, N-glycosylated. Phosphorylated; cAMP treatment promotes phosphorylation and activates the channel. Dephosphorylation decreases the ATPase activity (in vitro). Phosphorylation at PKA sites activates the channel. Phosphorylation at PKC sites enhances the response to phosphorylation by PKA. Phosphorylated by AMPK; this inhibits channel activity. Post-translationally, ubiquitinated, leading to its degradation in the lysosome. Deubiquitination by USP10 in early endosomes enhances its endocytic recycling to the cell membrane. Ubiquitinated by RNF185 during ER stress. Ubiquitinated by MARCHF2.

Its subcellular location is the apical cell membrane. It localises to the early endosome membrane. The protein localises to the cell membrane. It is found in the recycling endosome membrane. The protein resides in the endoplasmic reticulum membrane. Its subcellular location is the nucleus. It catalyses the reaction ATP + H2O + closed Cl(-) channel = ADP + phosphate + open Cl(-) channel.. The catalysed reaction is chloride(in) = chloride(out). It carries out the reaction hydrogencarbonate(in) = hydrogencarbonate(out). The enzyme catalyses ATP + H2O = ADP + phosphate + H(+). Epithelial ion channel that plays an important role in the regulation of epithelial ion and water transport and fluid homeostasis. Mediates the transport of chloride ions across the cell membrane. Possesses an intrinsic ATPase activity and utilizes ATP to gate its channel; the passive flow of anions through the channel is gated by cycles of ATP binding and hydrolysis by the ATP-binding domains. The ion channel is also permeable to HCO(3)(-); selectivity depends on the extracellular chloride concentration. Exerts its function also by modulating the activity of other ion channels and transporters. Contributes to the regulation of the pH and the ion content of the epithelial fluid layer. Modulates the activity of the epithelial sodium channel (ENaC) complex, in part by regulating the cell surface expression of the ENaC complex. May regulate bicarbonate secretion and salvage in epithelial cells by regulating the transporter SLC4A7. Can inhibit the chloride channel activity of ANO1. Plays a role in the chloride and bicarbonate homeostasis during sperm epididymal maturation and capacitation. The sequence is that of Cystic fibrosis transmembrane conductance regulator from Equus caballus (Horse).